A 182-amino-acid polypeptide reads, in one-letter code: NAD(P)H-quinone oxidoreductase subunit I, chloroplastic (182 aa).

2 4Fe-4S ferredoxin-type domains span residues Gly55–Lys84 and Leu95–Glu124. [4Fe-4S] cluster contacts are provided by Cys64, Cys67, Cys70, Cys74, Cys104, Cys107, Cys110, and Cys114.

The protein belongs to the complex I 23 kDa subunit family. In terms of assembly, NDH is composed of at least 16 different subunits, 5 of which are encoded in the nucleus. It depends on [4Fe-4S] cluster as a cofactor.

Its subcellular location is the plastid. The protein localises to the chloroplast thylakoid membrane. The catalysed reaction is a plastoquinone + NADH + (n+1) H(+)(in) = a plastoquinol + NAD(+) + n H(+)(out). The enzyme catalyses a plastoquinone + NADPH + (n+1) H(+)(in) = a plastoquinol + NADP(+) + n H(+)(out). In terms of biological role, NDH shuttles electrons from NAD(P)H:plastoquinone, via FMN and iron-sulfur (Fe-S) centers, to quinones in the photosynthetic chain and possibly in a chloroplast respiratory chain. The immediate electron acceptor for the enzyme in this species is believed to be plastoquinone. Couples the redox reaction to proton translocation, and thus conserves the redox energy in a proton gradient. The polypeptide is NAD(P)H-quinone oxidoreductase subunit I, chloroplastic (Buxus microphylla (Littleleaf boxwood)).